The following is a 192-amino-acid chain: Signal peptidase complex catalytic subunit SEC11C (192 aa).

The Cytoplasmic portion of the chain corresponds to 1 to 28 (MVRAGAVGTHLPTSSLDIFGDLRKMNKR). A helical; Signal-anchor for type II membrane protein transmembrane segment spans residues 29-48 (QLYYQVLNFAMIVSSALMIW). Residues 49–192 (KGLIVLTGSE…GAYVLLKRES (144 aa)) lie on the Lumenal side of the membrane. Catalysis depends on charge relay system residues serine 68, histidine 108, and aspartate 134. The interval 177 to 188 (ALVAVMGAYVLL) is C-terminal short (CTS) helix.

Belongs to the peptidase S26B family. Component of the signal peptidase complex paralog C (SPC-C) composed of a catalytic subunit SEC11C and three accessory subunits SPCS1, SPCS2 and SPCS3. Within the complex, interacts with SPCS2 and SPCS3. The complex induces a local thinning of the ER membrane which is used to measure the length of the signal peptide (SP) h-region of protein substrates. This ensures the selectivity of the complex towards h-regions shorter than 18-20 amino acids. Post-translationally, may undergo processing at the N-terminus.

The protein resides in the endoplasmic reticulum membrane. It carries out the reaction Cleavage of hydrophobic, N-terminal signal or leader sequences from secreted and periplasmic proteins.. In terms of biological role, catalytic component of the signal peptidase complex (SPC) which catalyzes the cleavage of N-terminal signal sequences from nascent proteins as they are translocated into the lumen of the endoplasmic reticulum. Specifically cleaves N-terminal signal peptides that contain a hydrophobic alpha-helix (h-region) shorter than 18-20 amino acids. This chain is Signal peptidase complex catalytic subunit SEC11C (Sec11c), found in Rattus norvegicus (Rat).